The following is a 698-amino-acid chain: Elongation factor G (698 aa).

Residues 11–291 (THFRNIGIAA…AVVDYLPSPL (281 aa)) enclose the tr-type G domain. GTP contacts are provided by residues 20 to 27 (AHIDAGKT), 90 to 94 (DTPGH), and 144 to 147 (NKMD).

This sequence belongs to the TRAFAC class translation factor GTPase superfamily. Classic translation factor GTPase family. EF-G/EF-2 subfamily.

Its subcellular location is the cytoplasm. In terms of biological role, catalyzes the GTP-dependent ribosomal translocation step during translation elongation. During this step, the ribosome changes from the pre-translocational (PRE) to the post-translocational (POST) state as the newly formed A-site-bound peptidyl-tRNA and P-site-bound deacylated tRNA move to the P and E sites, respectively. Catalyzes the coordinated movement of the two tRNA molecules, the mRNA and conformational changes in the ribosome. The chain is Elongation factor G from Deinococcus radiodurans (strain ATCC 13939 / DSM 20539 / JCM 16871 / CCUG 27074 / LMG 4051 / NBRC 15346 / NCIMB 9279 / VKM B-1422 / R1).